Reading from the N-terminus, the 711-residue chain is Interferon-induced GTP-binding protein Mx2 (711 aa).

Disordered stretches follow at residues Met1–Met26 and Met62–Ser88. A compositionally biased stretch (low complexity) spans Ser66–Pro82. The Dynamin-type G domain occupies Asp112–Pro383. Positions Gly122 to Ser129 are G1 motif. Gly122–Ser129 lines the GTP pocket. Positions Ile147 to Arg149 are G2 motif. Residues Asp221–Gly224 form a G3 motif region. GTP contacts are provided by residues Asp221–Ile225 and Thr290–Asp293. The G4 motif stretch occupies residues Thr290–Asp293. Positions Lys322–Gly325 are G5 motif. One can recognise a GED domain in the interval Ile619–Gln710.

It belongs to the TRAFAC class dynamin-like GTPase superfamily. Dynamin/Fzo/YdjA family. In terms of tissue distribution, ubiquitous.

Its subcellular location is the cytoplasm. It is found in the nucleus. Functionally, interferon-induced dynamin-like GTPase with antiviral activity against influenza virus A (FLUAV). The chain is Interferon-induced GTP-binding protein Mx2 (MX2) from Sus scrofa (Pig).